The primary structure comprises 299 residues: ATP phosphoribosyltransferase (299 aa).

Belongs to the ATP phosphoribosyltransferase family. Long subfamily. The cofactor is Mg(2+).

Its subcellular location is the cytoplasm. It catalyses the reaction 1-(5-phospho-beta-D-ribosyl)-ATP + diphosphate = 5-phospho-alpha-D-ribose 1-diphosphate + ATP. The protein operates within amino-acid biosynthesis; L-histidine biosynthesis; L-histidine from 5-phospho-alpha-D-ribose 1-diphosphate: step 1/9. Feedback inhibited by histidine. In terms of biological role, catalyzes the condensation of ATP and 5-phosphoribose 1-diphosphate to form N'-(5'-phosphoribosyl)-ATP (PR-ATP). Has a crucial role in the pathway because the rate of histidine biosynthesis seems to be controlled primarily by regulation of HisG enzymatic activity. This Actinobacillus pleuropneumoniae serotype 7 (strain AP76) protein is ATP phosphoribosyltransferase.